Consider the following 205-residue polypeptide: SREBP regulating gene protein (205 aa).

Over 1–16 (MVPCGAVLWRRLLRKR) the chain is Cytoplasmic. Residues 17 to 35 (WVLGVVFGLSLVYFLSSTF) form a helical membrane-spanning segment. The Lumenal segment spans residues 36-205 (KQEERTVRDR…GEYPPELLPV (170 aa)). An N-linked (GlcNAc...) asparagine glycan is attached at Asn-67.

The protein belongs to the SPRING family.

The protein localises to the golgi apparatus membrane. In terms of biological role, positively regulates hepatic SREBP signaling pathway by modulating the proper localization of SCAP (SREBP cleavage-activating protein) to the endoplasmic reticulum, thereby controlling the level of functional SCAP. This chain is SREBP regulating gene protein, found in Gallus gallus (Chicken).